Here is a 535-residue protein sequence, read N- to C-terminus: Butyrophilin-like protein 9 (535 aa).

The N-terminal stretch at 1 to 34 (MVDLSVSPDSLKPVSLTSSLVFLMHLLLLQPGEP) is a signal peptide. Over 35 to 256 (SSEVKVLGPE…VFVPGASAWK (222 aa)) the chain is Extracellular. The 82-residue stretch at 54–135 (EVEFPCHLWP…SDKGTYGCRF (82 aa)) folds into the Ig-like V-type domain. An intrachain disulfide couples Cys-59 to Cys-133. N-linked (GlcNAc...) asparagine glycans are attached at residues Asn-102, Asn-139, and Asn-224. The helical transmembrane segment at 257-277 (SAFVATLPLLLVLAALALGVL) threads the bilayer. Residues 276–315 (VLRKQRRSREKLRKQAEKRQEKLTAELEKLQTELDWRRAE) are a coiled coil. Topologically, residues 278–535 (RKQRRSREKL…EPADPALDWW (258 aa)) are cytoplasmic. The B30.2/SPRY domain maps to 310-509 (DWRRAEGQAE…LTICPLPVRG (200 aa)). The interval 340–367 (SLEVSEDGKSVSSRGAPPGPAPGHPQRF) is disordered.

The protein belongs to the immunoglobulin superfamily. BTN/MOG family.

The protein localises to the membrane. This chain is Butyrophilin-like protein 9 (BTNL9), found in Homo sapiens (Human).